The primary structure comprises 593 residues: Phosphoinositide phosphatase SAC6 (593 aa).

One can recognise an SAC domain in the interval 128 to 456 (LSVAERTTGL…GDDISIQYSG (329 aa)). The Phosphatase catalytic core motif lies at 391–402 (RTNCIDCLDRTN). Transmembrane regions (helical) follow at residues 526-546 (AVANFPVALTVILISFWFATM) and 555-575 (YKHLLFSLVWAGISVAVAALV).

In terms of tissue distribution, predominantly expressed in flowers.

The protein localises to the endoplasmic reticulum membrane. In terms of biological role, phosphoinositide phosphatase that hydrolyzes PtdIns(3)P and PtdIns(4)P. Involved in priming for different defense responses. This Arabidopsis thaliana (Mouse-ear cress) protein is Phosphoinositide phosphatase SAC6 (SAC6).